A 135-amino-acid polypeptide reads, in one-letter code: ATP synthase epsilon chain 1 (135 aa).

The protein belongs to the ATPase epsilon chain family. In terms of assembly, F-type ATPases have 2 components, CF(1) - the catalytic core - and CF(0) - the membrane proton channel. CF(1) has five subunits: alpha(3), beta(3), gamma(1), delta(1), epsilon(1). CF(0) has three main subunits: a, b and c.

It is found in the cell inner membrane. Functionally, produces ATP from ADP in the presence of a proton gradient across the membrane. The sequence is that of ATP synthase epsilon chain 1 from Nitrobacter hamburgensis (strain DSM 10229 / NCIMB 13809 / X14).